The sequence spans 252 residues: Triosephosphate isomerase (252 aa).

Substrate is bound at residue 9 to 11; the sequence is NWK. His-95 acts as the Electrophile in catalysis. The active-site Proton acceptor is Glu-167. Residues Gly-173, Ser-213, and 234–235 each bind substrate; that span reads GG. Residue Ser-213 is modified to Phosphoserine.

Belongs to the triosephosphate isomerase family. Homodimer.

The protein localises to the cytoplasm. It carries out the reaction D-glyceraldehyde 3-phosphate = dihydroxyacetone phosphate. Its pathway is carbohydrate biosynthesis; gluconeogenesis. It functions in the pathway carbohydrate degradation; glycolysis; D-glyceraldehyde 3-phosphate from glycerone phosphate: step 1/1. Involved in the gluconeogenesis. Catalyzes stereospecifically the conversion of dihydroxyacetone phosphate (DHAP) to D-glyceraldehyde-3-phosphate (G3P). In Oceanobacillus iheyensis (strain DSM 14371 / CIP 107618 / JCM 11309 / KCTC 3954 / HTE831), this protein is Triosephosphate isomerase.